The chain runs to 42 residues: Hemoglobin subunit beta-A (42 aa).

Residues 2-42 (EWTDAERSAILSLWGKIDTDELGPALLARLXLVXXXTQRYF) enclose the Globin domain.

It belongs to the globin family. As to quaternary structure, heterotetramer of two alpha chains and two beta chains. Red blood cells.

Its function is as follows. Involved in oxygen transport from gills to the various peripheral tissues. This is Hemoglobin subunit beta-A from Catostomus clarkii (Desert sucker).